The sequence spans 249 residues: DNA repair protein RecO (249 aa).

Belongs to the RecO family.

Functionally, involved in DNA repair and RecF pathway recombination. In Desulforudis audaxviator (strain MP104C), this protein is DNA repair protein RecO.